We begin with the raw amino-acid sequence, 276 residues long: Rhomboid protease GlpG (276 aa).

The next 6 helical transmembrane spans lie at 94-114 (GPVTWVMMIACVVVFIAMQIL), 142-162 (ALMHFSLMHILFNLLWWWYLG), 169-189 (LGSGKLIVITLISALLSGYVQ), 192-212 (FSGPWFGGLSGVVYALMGYVW), 229-249 (LIIFALIWIVAGWFDLFGMSM), and 250-270 (ANGAHIAGLAVGLAMAFVDSL). Residue serine 201 is the Nucleophile of the active site. Histidine 254 is a catalytic residue.

It belongs to the peptidase S54 family.

The protein localises to the cell inner membrane. The catalysed reaction is Cleaves type-1 transmembrane domains using a catalytic dyad composed of serine and histidine that are contributed by different transmembrane domains.. Rhomboid-type serine protease that catalyzes intramembrane proteolysis. The protein is Rhomboid protease GlpG of Escherichia coli O157:H7.